The sequence spans 15639 residues: FR901469 synthetase (15639 aa).

Residues 5–81 enclose the Carrier 1 domain; sequence HTSDGLRKLL…DLVDKIIEQQ (77 aa). An O-(pantetheine 4'-phosphoryl)serine modification is found at S42. A compositionally biased stretch (acidic residues) spans 82–94; that stretch reads LEEEEEDDDSLDN. The interval 82-105 is disordered; the sequence is LEEEEEDDDSLDNESERDHSQKDL. The segment at 140–553 is condensation 1; the sequence is PCLSMQEGCL…RDFLPLTEDD (414 aa). Residues 579 to 971 are adenylation 1; it reads TISKQPDAVA…LGRRDTQVKI (393 aa). The region spanning 1108–1184 is the Carrier 2 domain; sequence TPATAIEKEL…ELALVARSTT (77 aa). S1145 carries the O-(pantetheine 4'-phosphoryl)serine modification. An epimerase 1 region spans residues 1219–1626; it reads RSSNRFNQSV…TITHLVKRLA (408 aa). The interval 1667–2097 is condensation 2; it reads EDVLPCTPIQ…LGNLSLLTNN (431 aa). An adenylation 2 region spans residues 2122-2518; it reads QEAAKEYTNA…GRRDNQIKIR (397 aa). The region spanning 2654–2730 is the Carrier 3 domain; that stretch reads VPATALEKQL…ELALKAKSTT (77 aa). Residue S2691 is modified to O-(pantetheine 4'-phosphoryl)serine. The interval 2761 to 3176 is epimerase 2; that stretch reads VSAGEHRYNQ…TELLHRLEQM (416 aa). Positions 3215–3640 are condensation 3; sequence QDIYPCSPTQ…DDLIMMSPED (426 aa). The adenylation 3 stretch occupies residues 3669 to 4059; it reads TQPHAPAVAA…MGRIDSQIKI (391 aa). A Carrier 4 domain is found at 4193–4269; that stretch reads PPSNDAERMV…QLAAIVTQRG (77 aa). S4230 is modified (O-(pantetheine 4'-phosphoryl)serine). The segment at 4316 to 4714 is condensation 4; the sequence is EDVYPCTPLQ…ILAHGTGLEE (399 aa). The segment at 4756-5149 is adenylation 4; that stretch reads TEAASTRPDA…GRLDTQAKLR (394 aa). The Carrier 5 domain maps to 5284–5360; the sequence is EPATIMERQL…DLASHIDHHT (77 aa). Position 5321 is an O-(pantetheine 4'-phosphoryl)serine (S5321). The condensation 5 stretch occupies residues 5402–5802; the sequence is EDIYPCTPLQ…TVFAQLCDSS (401 aa). Residues 5847 to 6238 form an adenylation 5 region; it reads KYPNEPAVHA…LGRRDSQMKV (392 aa). The Carrier 6 domain occupies 6375–6451; sequence QPSTTAEIKL…DMAKIVEEHV (77 aa). Position 6412 is an O-(pantetheine 4'-phosphoryl)serine (S6412). The interval 6494 to 6889 is condensation 6; that stretch reads EDVYPATPLQ…RFAKVYQQLS (396 aa). The interval 6952–7335 is adenylation 6; that stretch reads WDGSMTYAEL…GRRDTQIKIR (384 aa). The region spanning 7473-7546 is the Carrier 7 domain; it reads TAMEEQLRTV…QLALLASTDE (74 aa). The residue at position 7507 (S7507) is an O-(pantetheine 4'-phosphoryl)serine. The segment at 7580-7992 is epimerase 3; that stretch reads MGENRYNQSV…SKTLEELTTQ (413 aa). Residues 8034–8459 are condensation 7; that stretch reads EDVFPASPMQ…QRMRNISLAS (426 aa). The segment at 8486–8882 is adenylation 7; sequence QKSVHARPDA…GRRDTQVKIR (397 aa). The 77-residue stretch at 9015–9091 folds into the Carrier 8 domain; sequence QPATDAERQL…DLAKTIQDSE (77 aa). An O-(pantetheine 4'-phosphoryl)serine modification is found at S9052. Positions 9136-9535 are condensation 8; that stretch reads EDVYPCTPLQ…FAAIFRQLCD (400 aa). The interval 9583–9974 is adenylation 8; that stretch reads KNPHAIAVNA…GRRDNQMKIR (392 aa). The Carrier 9 domain maps to 10110 to 10186; the sequence is EPATPMEMQL…GLAALIQKQI (77 aa). S10147 is modified (O-(pantetheine 4'-phosphoryl)serine). Residues 10186-10208 form a disordered region; the sequence is IDEEEEYDDSEEEEEDDEEEVRE. Residues 10187 to 10206 are compositionally biased toward acidic residues; the sequence is DEEEEYDDSEEEEEDDEEEV. A condensation 9 region spans residues 10240 to 10662; that stretch reads VEDVYPCTPL…VLSETDKTKI (423 aa). The adenylation 9 stretch occupies residues 10683–11082; it reads KQAIERPNAP…GRRDTQIKIR (400 aa). Residues 11217-11293 form the Carrier 10 domain; it reads EPATGMERHL…DLARETESQG (77 aa). An O-(pantetheine 4'-phosphoryl)serine modification is found at S11254. Positions 11329-11725 are condensation 10; sequence EDVYPCTPLQ…ETIFQQLSSV (397 aa). The tract at residues 11770-12165 is adenylation 10; it reads FKRTADKQPE…GRRDTQIKVR (396 aa). In terms of domain architecture, Carrier 11 spans 12298–12374; sequence EPSTEMERRI…DLAAAVQGRI (77 aa). S12335 bears the O-(pantetheine 4'-phosphoryl)serine mark. The tract at residues 12418–12830 is condensation 11; that stretch reads EDVYPATPLQ…IQDIEMVSEQ (413 aa). An adenylation 11 region spans residues 12861–13249; the sequence is SRADEIAICA…GRRDTQIKIR (389 aa). Residues 13383–13459 enclose the Carrier 12 domain; the sequence is MPGTVQEEQL…QLGQKVKEAV (77 aa). Position 13420 is an O-(pantetheine 4'-phosphoryl)serine (S13420). The epimerase 4 stretch occupies residues 13476–13901; the sequence is APIQQMFFEQ…LKDMTSTLLQ (426 aa). Positions 13940-14369 are condensation 12; it reads EDILPCSPIQ…SIVGEHDLQQ (430 aa). Residues 14390 to 14789 form an adenylation 12 region; the sequence is RDAAHRTPDA…GRGDGQIKIR (400 aa). Residues 14916 to 14992 enclose the Carrier 13 domain; the sequence is LPASADEGAL…DMASVASAAR (77 aa). An O-(pantetheine 4'-phosphoryl)serine modification is found at S14953. Positions 15062 to 15433 are condensation 13; that stretch reads QHAVDLAALK…DIMVRLASQQ (372 aa). Disordered stretches follow at residues 15434-15511 and 15617-15639; these read EGTV…ENRQ and VQTN…KGHI. Over residues 15455 to 15472 the composition is skewed to low complexity; sequence NGTNGSNGDGTDAANGIG. Residues 15482–15494 show a composition bias toward basic and acidic residues; the sequence is AVEKSSGDAEVEK. Positions 15495 to 15511 are enriched in polar residues; that stretch reads VSTNGHADNNTSAENRQ.

This sequence belongs to the NRP synthetase family.

The protein operates within antifungal biosynthesis. In terms of biological role, nonribosomal peptide synthetase; part of the gene cluster that mediates the biosynthesis of the antifungal antibiotic FR901469, an inhibitor of beta-1,3-glucansynthase, exerting antifungal activity against the pathogenes Candida albicans and Aspergillus fumigatus. FR901469 is a cyclic depsipeptide containing 12 amino acid residues and a fatty acid chain. The NRPS frbI contains 12 modules responsible for the formation of the depsipeptide backbone which is denoted as Acyl-Thr-Ala-Tyr-Val-4OHPro-Thr-Thr-3OHPro-threo3OHGln-Gly-Thr-Orn-OH (C71H116N14O23). The PKS frbB is probably involved in the production of the hydrocarbon chain, and the acyl-CoA ligase frbC might be involved in the transport of the chain to the peptide ptoduct of frbI. Because FR901469 contains 3 hydroxylated amino acid residues, the 3 oxygenases frbA, frbH, and frbJ might be participating in amino acid hydroxylation. As no thioesterase domains were detected in frbI or frbB, the thioesterases frbD and frbE may instead release and cyclize the products of the NRPS and PKS, respectively. This chain is FR901469 synthetase, found in Dothideomycetidae sp. (strain 11243) (Fungal sp. (strain No.11243)).